A 509-amino-acid polypeptide reads, in one-letter code: GMP synthase [glutamine-hydrolyzing] (509 aa).

Residues 4-193 (NVLILDFGSQ…LVKIAQVPQN (190 aa)) enclose the Glutamine amidotransferase type-1 domain. C79 (nucleophile) is an active-site residue. Active-site residues include H167 and E169. The GMPS ATP-PPase domain occupies 194–384 (FTPNAFVSDM…LGIDAELLGR (191 aa)). Residue 221–227 (SGGVDST) coordinates ATP.

As to quaternary structure, homodimer.

It carries out the reaction XMP + L-glutamine + ATP + H2O = GMP + L-glutamate + AMP + diphosphate + 2 H(+). It participates in purine metabolism; GMP biosynthesis; GMP from XMP (L-Gln route): step 1/1. Its function is as follows. Catalyzes the synthesis of GMP from XMP. This is GMP synthase [glutamine-hydrolyzing] from Flavobacterium psychrophilum (strain ATCC 49511 / DSM 21280 / CIP 103535 / JIP02/86).